We begin with the raw amino-acid sequence, 119 residues long: Single-stranded DNA-binding protein (119 aa).

The 100-residue stretch at 3-102 (INIVTLVGRV…IRVDQLELLG (100 aa)) folds into the SSB domain.

In terms of assembly, homotetramer.

This chain is Single-stranded DNA-binding protein (ssb1), found in Anabaena variabilis.